A 980-amino-acid polypeptide reads, in one-letter code: Valine--tRNA ligase (980 aa).

The interval 1-40 (MADKGCEAAQSKDSSAPGSGEPRPKTEKELERERQKAAKL) is disordered. Positions 22–40 (PRPKTEKELERERQKAAKL) are enriched in basic and acidic residues. A 'HIGH' region motif is present at residues 139 to 149 (PNVTGALHIGH). The short motif at 652-656 (KMSKS) is the 'KMSKS' region element. Residue lysine 655 participates in ATP binding.

Belongs to the class-I aminoacyl-tRNA synthetase family.

The protein localises to the cytoplasm. The enzyme catalyses tRNA(Val) + L-valine + ATP = L-valyl-tRNA(Val) + AMP + diphosphate. This is Valine--tRNA ligase (vas2) from Schizosaccharomyces pombe (strain 972 / ATCC 24843) (Fission yeast).